Here is an 89-residue protein sequence, read N- to C-terminus: Small ribosomal subunit protein uS14A (89 aa).

The protein belongs to the universal ribosomal protein uS14 family. Part of the 30S ribosomal subunit. Contacts proteins S3 and S10.

Its function is as follows. Binds 16S rRNA, required for the assembly of 30S particles and may also be responsible for determining the conformation of the 16S rRNA at the A site. The protein is Small ribosomal subunit protein uS14A of Staphylococcus epidermidis (strain ATCC 35984 / DSM 28319 / BCRC 17069 / CCUG 31568 / BM 3577 / RP62A).